The following is a 366-amino-acid chain: tRNA/tmRNA (uracil-C(5))-methyltransferase (366 aa).

Residues glutamine 190, tyrosine 218, asparagine 223, glutamate 239, and aspartate 299 each coordinate S-adenosyl-L-methionine. The active-site Nucleophile is the cysteine 324. Residue glutamate 358 is the Proton acceptor of the active site.

The protein belongs to the class I-like SAM-binding methyltransferase superfamily. RNA M5U methyltransferase family. TrmA subfamily.

The enzyme catalyses uridine(54) in tRNA + S-adenosyl-L-methionine = 5-methyluridine(54) in tRNA + S-adenosyl-L-homocysteine + H(+). The catalysed reaction is uridine(341) in tmRNA + S-adenosyl-L-methionine = 5-methyluridine(341) in tmRNA + S-adenosyl-L-homocysteine + H(+). Its function is as follows. Dual-specificity methyltransferase that catalyzes the formation of 5-methyluridine at position 54 (m5U54) in all tRNAs, and that of position 341 (m5U341) in tmRNA (transfer-mRNA). The chain is tRNA/tmRNA (uracil-C(5))-methyltransferase from Citrobacter koseri (strain ATCC BAA-895 / CDC 4225-83 / SGSC4696).